Here is a 385-residue protein sequence, read N- to C-terminus: MTASSSLFSCSMHMEVLTPKISKWPKNFVSCHSKISYVETNYLKSTCYPISRFFCINNLKKTRQRDGIHCFSEGQKFQLDDVVEAQQFDRDILNAIFEVARDMEKIERNSPESQILKGYLMATLFYEPSTRTRLSFESAMRRLGGEVLTTENAREFSSAAKGETLEDTIRTVEGYSDLIVLRHFESGAARRAATIAGIPIVNAGDGPGQHPSQALLDVYTIEREIGKLDGIKVGLVGDLANGRTVRSLTYLLAKYKDVKIYFVSPEVVKMKDDIKDYLTSKGVDWEESSDLVEVASECDVVYQTRIQKERFGERLDLYEKARGKFIVNQNILNAMQRHAVIMHPLPRLDEITVDVDADPRAAYFRQAKYGLYIRMALLKLLLVGW.

The N-terminal 30 residues, 1-30 (MTASSSLFSCSMHMEVLTPKISKWPKNFVS), are a transit peptide targeting the chloroplast. Carbamoyl phosphate is bound by residues R131 and T132. UMP-binding residues include R131 and T132. Residue K161 participates in L-aspartate binding. Carbamoyl phosphate is bound by residues R182, H210, and Q213. Residues R182 and H210 each coordinate UMP. Residues R243 and R305 each coordinate UMP. L-aspartate contacts are provided by R243 and R305. L345 and P346 together coordinate carbamoyl phosphate.

Belongs to the aspartate/ornithine carbamoyltransferase superfamily. ATCase family. In terms of assembly, homotrimer.

The protein localises to the plastid. It localises to the chloroplast. The enzyme catalyses carbamoyl phosphate + L-aspartate = N-carbamoyl-L-aspartate + phosphate + H(+). It participates in pyrimidine metabolism; UMP biosynthesis via de novo pathway; (S)-dihydroorotate from bicarbonate: step 2/3. Its activity is regulated as follows. Feedback inhibited by UMP. In terms of biological role, catalyzes the condensation of carbamoyl phosphate and aspartate to form carbamoyl aspartate and inorganic phosphate, the committed step in the de novo pyrimidine nucleotide biosynthesis pathway. In Pisum sativum (Garden pea), this protein is Aspartate carbamoyltransferase 2, chloroplastic (PYRB2).